A 269-amino-acid polypeptide reads, in one-letter code: 5'-nucleotidase SurE (269 aa).

A divalent metal cation-binding residues include Asp11, Asp12, Ser43, and Asn101.

The protein belongs to the SurE nucleotidase family. Requires a divalent metal cation as cofactor.

The protein localises to the cytoplasm. The catalysed reaction is a ribonucleoside 5'-phosphate + H2O = a ribonucleoside + phosphate. Nucleotidase that shows phosphatase activity on nucleoside 5'-monophosphates. In Prochlorococcus marinus (strain MIT 9303), this protein is 5'-nucleotidase SurE.